We begin with the raw amino-acid sequence, 237 residues long: MNNWSQGSTPQGSDPSPYAPELGSLPDGSQSDDHGDTVNKTGTTTIGITTDEGVVIATDMRASLGGRFVSNKNVQKVEQIHPTGALTLVGSVGGAQSFIRTLRAEVNLYESRRGEPMPIEALATLAGNFARGGPFRAINPILGGVDEEGSHVYSIDPAGGVMADDYTVTGSGMQLAYGLLEQEYEEGLSLEEAQSVAARAIESAVERDTGSGNGVFLAAVTGEGVDIQGHNDFDAVI.

The span at 1–14 (MNNWSQGSTPQGSD) shows a compositional bias: polar residues. Residues 1 to 42 (MNNWSQGSTPQGSDPSPYAPELGSLPDGSQSDDHGDTVNKTG) constitute a propeptide, removed in mature form; by autocatalysis. The disordered stretch occupies residues 1-45 (MNNWSQGSTPQGSDPSPYAPELGSLPDGSQSDDHGDTVNKTGTTT). The active-site Nucleophile is threonine 43.

The protein belongs to the peptidase T1B family. In terms of assembly, the 20S proteasome core is composed of 14 alpha and 14 beta subunits that assemble into four stacked heptameric rings, resulting in a barrel-shaped structure. The two inner rings, each composed of seven catalytic beta subunits, are sandwiched by two outer rings, each composed of seven alpha subunits. The catalytic chamber with the active sites is on the inside of the barrel. Has a gated structure, the ends of the cylinder being occluded by the N-termini of the alpha-subunits. Is capped at one or both ends by the proteasome regulatory ATPase, PAN.

It is found in the cytoplasm. The enzyme catalyses Cleavage of peptide bonds with very broad specificity.. Its activity is regulated as follows. The formation of the proteasomal ATPase PAN-20S proteasome complex, via the docking of the C-termini of PAN into the intersubunit pockets in the alpha-rings, triggers opening of the gate for substrate entry. Interconversion between the open-gate and close-gate conformations leads to a dynamic regulation of the 20S proteasome proteolysis activity. Component of the proteasome core, a large protease complex with broad specificity involved in protein degradation. In Haloterrigena turkmenica (strain ATCC 51198 / DSM 5511 / JCM 9101 / NCIMB 13204 / VKM B-1734 / 4k) (Halococcus turkmenicus), this protein is Proteasome subunit beta 2.